A 205-amino-acid chain; its full sequence is MQEKKEEDLQQALNKVSEVGIDEVGRGAIFGPVFSAVVVLTEKNKFLLKQLGVKDSKKLTPKKRKFLVPKILLLSSDYGIGQSSVREIDNLGIRVATELSMIRALKKLKEKPSELIVDGPLLLRPWRGTQKNIVSGDSKFISIASASIVAKVSRDNLMMKLEKKYSGYLIFKNKGYGTREHLSLIKKNGVTNLHRKSFLKKSNLF.

The RNase H type-2 domain maps to 16–205 (VSEVGIDEVG…KSFLKKSNLF (190 aa)). The a divalent metal cation site is built by Asp-22, Glu-23, and Asp-118.

Belongs to the RNase HII family. The cofactor is Mn(2+). It depends on Mg(2+) as a cofactor.

The protein resides in the cytoplasm. It carries out the reaction Endonucleolytic cleavage to 5'-phosphomonoester.. Its function is as follows. Endonuclease that specifically degrades the RNA of RNA-DNA hybrids. This chain is Ribonuclease HII, found in Prochlorococcus marinus (strain MIT 9215).